The primary structure comprises 123 residues: Small ribosomal subunit protein uS12 (123 aa).

A 3-methylthioaspartic acid modification is found at D89. The tract at residues 100–123 (GSLDTSGVKDRKQGRSKYGAKRPK) is disordered. Basic residues predominate over residues 113–123 (GRSKYGAKRPK).

This sequence belongs to the universal ribosomal protein uS12 family. Part of the 30S ribosomal subunit. Contacts proteins S8 and S17. May interact with IF1 in the 30S initiation complex.

Functionally, with S4 and S5 plays an important role in translational accuracy. In terms of biological role, interacts with and stabilizes bases of the 16S rRNA that are involved in tRNA selection in the A site and with the mRNA backbone. Located at the interface of the 30S and 50S subunits, it traverses the body of the 30S subunit contacting proteins on the other side and probably holding the rRNA structure together. The combined cluster of proteins S8, S12 and S17 appears to hold together the shoulder and platform of the 30S subunit. The chain is Small ribosomal subunit protein uS12 from Pseudomonas aeruginosa (strain LESB58).